Here is a 210-residue protein sequence, read N- to C-terminus: Large ribosomal subunit protein uL5 (210 aa).

Positions 188-210 (AKDDPKKAKTKRGPAYYAKKKKK) are disordered. Residues 195–210 (AKTKRGPAYYAKKKKK) are compositionally biased toward basic residues.

The protein belongs to the universal ribosomal protein uL5 family. In terms of assembly, part of the 50S ribosomal subunit; part of the 5S rRNA/L5/L18/L25 subcomplex. Contacts the 5S rRNA and the P site tRNA. Forms a bridge to the 30S subunit in the 70S ribosome.

This is one of the proteins that bind and probably mediate the attachment of the 5S RNA into the large ribosomal subunit, where it forms part of the central protuberance. In the 70S ribosome it contacts protein S13 of the 30S subunit (bridge B1b), connecting the 2 subunits; this bridge is implicated in subunit movement. Contacts the P site tRNA; the 5S rRNA and some of its associated proteins might help stabilize positioning of ribosome-bound tRNAs. The sequence is that of Large ribosomal subunit protein uL5 from Cutibacterium acnes (strain DSM 16379 / KPA171202) (Propionibacterium acnes).